The primary structure comprises 323 residues: Fructose-1,6-bisphosphatase class 1 (323 aa).

Positions 84, 103, 105, and 106 each coordinate Mg(2+). Residues 106-109 (DGSS), N198, and K264 contribute to the substrate site. Residue E270 participates in Mg(2+) binding.

This sequence belongs to the FBPase class 1 family. As to quaternary structure, homotetramer. The cofactor is Mg(2+).

The protein localises to the cytoplasm. The enzyme catalyses beta-D-fructose 1,6-bisphosphate + H2O = beta-D-fructose 6-phosphate + phosphate. It participates in carbohydrate biosynthesis; gluconeogenesis. In Hydrogenovibrio crunogenus (strain DSM 25203 / XCL-2) (Thiomicrospira crunogena), this protein is Fructose-1,6-bisphosphatase class 1.